Here is a 77-residue protein sequence, read N- to C-terminus: NAD(P)H-quinone oxidoreductase subunit L (77 aa).

2 consecutive transmembrane segments (helical) span residues 12–32 (LIAY…LLFY) and 47–67 (LGIY…SPFL).

This sequence belongs to the complex I NdhL subunit family. NDH-1 can be composed of about 15 different subunits; different subcomplexes with different compositions have been identified which probably have different functions.

The protein resides in the cellular thylakoid membrane. It carries out the reaction a plastoquinone + NADH + (n+1) H(+)(in) = a plastoquinol + NAD(+) + n H(+)(out). The enzyme catalyses a plastoquinone + NADPH + (n+1) H(+)(in) = a plastoquinol + NADP(+) + n H(+)(out). NDH-1 shuttles electrons from an unknown electron donor, via FMN and iron-sulfur (Fe-S) centers, to quinones in the respiratory and/or the photosynthetic chain. The immediate electron acceptor for the enzyme in this species is believed to be plastoquinone. Couples the redox reaction to proton translocation, and thus conserves the redox energy in a proton gradient. Cyanobacterial NDH-1 also plays a role in inorganic carbon-concentration. This chain is NAD(P)H-quinone oxidoreductase subunit L, found in Prochlorococcus marinus (strain MIT 9301).